The following is a 298-amino-acid chain: Ethanolamine ammonia-lyase small subunit (298 aa).

The segment at 17-37 is disordered; it reads MGQDVPQPVAPSKQEGAKPQC. Adenosylcob(III)alamin contacts are provided by valine 210, glutamate 231, and cysteine 261.

It belongs to the EutC family. The basic unit is a heterodimer which dimerizes to form tetramers. The heterotetramers trimerize; 6 large subunits form a core ring with 6 small subunits projecting outwards. Requires adenosylcob(III)alamin as cofactor.

It localises to the bacterial microcompartment. It catalyses the reaction ethanolamine = acetaldehyde + NH4(+). It functions in the pathway amine and polyamine degradation; ethanolamine degradation. In terms of biological role, catalyzes the deamination of various vicinal amino-alcohols to oxo compounds. Allows this organism to utilize ethanolamine as the sole source of nitrogen and carbon in the presence of external vitamin B12. The protein is Ethanolamine ammonia-lyase small subunit of Salmonella paratyphi A (strain ATCC 9150 / SARB42).